A 317-amino-acid polypeptide reads, in one-letter code: uncharacterized protein (317 aa).

In terms of domain architecture, HTH lysR-type spans 29–86 (IDLNLLTIFEAVYVHKGIVNAAKVLNLTPSAISQSIQKLRVIFPDPLFIRKGQGVTPT). The segment at residues 46–65 (IVNAAKVLNLTPSAISQSIQ) is a DNA-binding region (H-T-H motif).

This sequence belongs to the LysR transcriptional regulatory family.

This is an uncharacterized protein from Escherichia coli (strain K12).